The primary structure comprises 427 residues: MAATSYMTPPSGDLDMALGGGGYHTSSPRSAADAGEMKYMQHHHHHHAAAAAAAHHQLPSSPSPNGQGNGGGLGLGSGSGLGSWSALHPDPWMQTHHTHHLPAAAAVASAADTVKQEMSHLSQQTRIQQGMASPHAAWHAPHAGHYAPTGGSPLQYHHAMNGMLHHPAHAVAAAHHQSVAPLHHTLRGESPQLHIHHHMGGGDRDAISGGEEDTPTSDDLEAFAKQFKQRRIKLGFTQADVGLALGTLYGNVFSQTTICRFEALQLSFKNMCKLKPLLQKWLEEADSTTGSPTSIDKIAAQGRKRKKRTSIEVSVKGALEQHFHKQPKPSAQEITSLADSLQLEKEVVRVWFCNRRQKEKRMTPPNTLGGDMMDGMPPGHMHHGGYHPHHDMHGSPMGTHSHSHSPPMLSPQNMQSSAVAAHQLAAH.

4 disordered regions span residues 39–77 (YMQH…GLGS), 196–217 (HHHM…TPTS), 288–309 (TTGS…KKRT), and 390–427 (HDMH…LAAH). Residues 49–66 (AAAAAAHHQLPSSPSPNG) show a composition bias toward low complexity. Over residues 67–77 (QGNGGGLGLGS) the composition is skewed to gly residues. The POU-specific domain maps to 212–286 (EDTPTSDDLE…LLQKWLEEAD (75 aa)). The homeobox DNA-binding region spans 304-363 (KRKKRTSIEVSVKGALEQHFHKQPKPSAQEITSLADSLQLEKEVVRVWFCNRRQKEKRMT).

The protein belongs to the POU transcription factor family. Class-3 subfamily. In terms of tissue distribution, coexpressed with acj6 in overlapping subsets of neurons in the embryonic epidermis and central nervous system. First detected in the precursor of the tracheal pits and the stomodeal invagination and later in the peripheral nervous system.

Its subcellular location is the nucleus. Binds to a DNA sequence element required for the expression of the dopa decarboxylase gene (Ddc) in specific dopaminergic neurons. Could also play an early role in specific ectodermal cells, and a subsequent role in the embryonic nervous system. The chain is POU domain protein CF1A (vvl) from Drosophila melanogaster (Fruit fly).